Here is a 364-residue protein sequence, read N- to C-terminus: Probable protein phosphatase methylesterase 1 (364 aa).

The interval M1–M53 is disordered. The segment covering D11–H23 has biased composition (polar residues). Residues S164, D190, and H316 contribute to the active site.

The protein belongs to the AB hydrolase superfamily.

It carries out the reaction [phosphatase 2A protein]-C-terminal L-leucine methyl ester + H2O = [phosphatase 2A protein]-C-terminal L-leucine + methanol + H(+). Functionally, demethylates proteins that have been reversibly carboxymethylated. The sequence is that of Probable protein phosphatase methylesterase 1 from Caenorhabditis elegans.